The sequence spans 1077 residues: Error-prone DNA polymerase (1077 aa).

This sequence belongs to the DNA polymerase type-C family. DnaE2 subfamily.

Its subcellular location is the cytoplasm. It carries out the reaction DNA(n) + a 2'-deoxyribonucleoside 5'-triphosphate = DNA(n+1) + diphosphate. Its function is as follows. DNA polymerase involved in damage-induced mutagenesis and translesion synthesis (TLS). It is not the major replicative DNA polymerase. The chain is Error-prone DNA polymerase from Brucella melitensis biotype 1 (strain ATCC 23456 / CCUG 17765 / NCTC 10094 / 16M).